We begin with the raw amino-acid sequence, 1353 residues long: Xanthine dehydrogenase (1353 aa).

The region spanning 17–104 (STLIFFVNGK…GSAVTTVEGI (88 aa)) is the 2Fe-2S ferredoxin-type domain. [2Fe-2S] cluster is bound by residues C56, C61, C64, C86, C126, C129, C161, and C163. The 190-residue stretch at 245 to 434 (YKGERATWYR…VGLYFPKTLE (190 aa)) folds into the FAD-binding PCMH-type domain. FAD contacts are provided by residues 273-280 (LVVGNTEI), F353, 363-367 (SLGGN), D376, L424, and K442. Residues Q790 and F821 each coordinate Mo-molybdopterin. The substrate site is built by E825 and R903. Mo-molybdopterin is bound at residue R935. F937 provides a ligand contact to substrate. A1102 contacts Mo-molybdopterin. E1285 serves as the catalytic Proton acceptor.

This sequence belongs to the xanthine dehydrogenase family. In terms of assembly, homodimer. Requires FAD as cofactor. Mo-molybdopterin is required as a cofactor. [2Fe-2S] cluster serves as cofactor.

Its subcellular location is the peroxisome. It carries out the reaction xanthine + NAD(+) + H2O = urate + NADH + H(+). The catalysed reaction is hypoxanthine + NAD(+) + H2O = xanthine + NADH + H(+). Its function is as follows. Key enzyme in purine degradation. Catalyzes the oxidation of hypoxanthine to xanthine. Catalyzes the oxidation of xanthine to uric acid. The sequence is that of Xanthine dehydrogenase (XDH) from Calliphora vicina (Blue blowfly).